The chain runs to 723 residues: Nuclear intron maturase 3, mitochondrial (723 aa).

A mitochondrion-targeting transit peptide spans 1-26; the sequence is MVLRLRVHSFYNRGISFLVSSSLRNL. The interval 532 to 597 is intron maturase type-2; degenerate; the sequence is VSAPEELVRK…HYTKDLRVSD (66 aa). The THAP-type zinc-finger motif lies at 646-700; sequence CAASFCERSDTIMHRVHLLQNRLHINPLDEEKWVPGMGTIHSALNRKCLPLCSTH.

Belongs to the plant nuclear intron maturase (nMat) family.

The protein localises to the mitochondrion. In terms of biological role, nuclear-encoded maturase required for splicing of group-II introns in mitochondria. Necessary for mitochondrial biogenesis during early developmental stages. This is Nuclear intron maturase 3, mitochondrial from Arabidopsis thaliana (Mouse-ear cress).